Reading from the N-terminus, the 357-residue chain is 3-isopropylmalate dehydrogenase (357 aa).

Residues Arg-97, Arg-107, Arg-135, and Asp-224 each coordinate substrate. Asp-224, Asp-248, and Asp-252 together coordinate Mg(2+). 282–294 is a binding site for NAD(+); the sequence is GSAPDIAGQDLAN.

This sequence belongs to the isocitrate and isopropylmalate dehydrogenases family. LeuB type 1 subfamily. In terms of assembly, homodimer. It depends on Mg(2+) as a cofactor. Mn(2+) serves as cofactor.

The protein localises to the cytoplasm. The enzyme catalyses (2R,3S)-3-isopropylmalate + NAD(+) = 4-methyl-2-oxopentanoate + CO2 + NADH. The protein operates within amino-acid biosynthesis; L-leucine biosynthesis; L-leucine from 3-methyl-2-oxobutanoate: step 3/4. In terms of biological role, catalyzes the oxidation of 3-carboxy-2-hydroxy-4-methylpentanoate (3-isopropylmalate) to 3-carboxy-4-methyl-2-oxopentanoate. The product decarboxylates to 4-methyl-2 oxopentanoate. The protein is 3-isopropylmalate dehydrogenase of Prochlorococcus marinus (strain MIT 9313).